A 937-amino-acid chain; its full sequence is MPAILDKILRIGEGKILRQLEAIAQAVNAIEDDFVAMSDAELQGMTAEFKERLANGESLDDIMPEAFATVREAARRVIGLRPFDVQVMGAGALHMGNIAEMKTGEGKTLVAVLPSYLNALSGKGVHIVTVNDYLAKFQSEMMGRVHHFLGLTVGVILPEMRPDERRVAYNCDITYGTNNELGFDYLRDNMAGSIEECVQRGHNFAIVDEVDSILIDEARTPLIISGPTQDEVHWYAEFAKVARNLVRDEDYEVDEKKRTISVLEPGITKVEDHLGIENLYESANTPLISFLHNSIKAKELFHNDKEYVVLNGEVLIVDEHTGRMLAGRRYNDGLHQAIEAKEDVQVREEYQTLATVTLQNYFRLYDKLSGMTGTAMTEASEFDKIYKLGVVPIPTNKPMARKDQADLVYRTEEAKYEAVVEDIAERHEKGQPILVGTVSVEKSEHLSAKLKKRGIPHSVLNAKVHADEAKIVALAGHKGAVTVATNMAGRGTDIMLGGSVEFLADAELRKRGLEPAGETADEYQAEWPGTVERIKSQVANEHDEVRALGGLYVVGTERHESRRIDNQLRGRSGRQGDPGESRFYLSLQDELMRLFKSDWVDRVLQVLKIPDDVPIENKRVTSAIANAQGQVESQNFESRKNVLKYDDVMDRQRKVIYAERREVLEGKDLQDQIRTFIDDTVTGYVTGATEEFAEEWDLEALWTALRQIYPVGVDYRVLEEEAGGRANMDRDELIAVLQKDAHEAYDRREAEVGETVMRELERRVVLSVLDRKWREHLYEMDYLREGIYLRAYSQRDPLVEYQREGFEMFAAMMDGIKEESVGFLFNLEVQVEIEEEDEEEEEVLEPMRQPVPSFDQQGAMPQIRAKGLERPSQPTKLAYSAPSEDGDAEVKGATVTNADDEFAGVGRNDRCPCGSGKKFKQCHGRPGGPTGLTARVS.

ATP-binding positions include Q86, 104–108 (GEGKT), and D493. A disordered region spans residues 868-889 (LERPSQPTKLAYSAPSEDGDAE). Residues C911, C913, C922, and H923 each coordinate Zn(2+). Residues 915 to 937 (SGKKFKQCHGRPGGPTGLTARVS) are disordered.

Belongs to the SecA family. In terms of assembly, monomer and homodimer. Part of the essential Sec protein translocation apparatus which comprises SecA, SecYEG and auxiliary proteins SecDF. Other proteins may also be involved. Zn(2+) serves as cofactor.

It is found in the cell membrane. The protein localises to the cytoplasm. It carries out the reaction ATP + H2O + cellular proteinSide 1 = ADP + phosphate + cellular proteinSide 2.. In terms of biological role, part of the Sec protein translocase complex. Interacts with the SecYEG preprotein conducting channel. Has a central role in coupling the hydrolysis of ATP to the transfer of proteins into and across the cell membrane, serving as an ATP-driven molecular motor driving the stepwise translocation of polypeptide chains across the membrane. The chain is Protein translocase subunit SecA from Nocardioides sp. (strain ATCC BAA-499 / JS614).